Reading from the N-terminus, the 1427-residue chain is DNA-directed RNA polymerase subunit beta' (1427 aa).

Residues C66, C68, C81, and C84 each coordinate Zn(2+). Mg(2+) is bound by residues D472, D474, and D476. Zn(2+)-binding residues include C815, C889, C896, and C899.

This sequence belongs to the RNA polymerase beta' chain family. In terms of assembly, the RNAP catalytic core consists of 2 alpha, 1 beta, 1 beta' and 1 omega subunit. When a sigma factor is associated with the core the holoenzyme is formed, which can initiate transcription. Mg(2+) is required as a cofactor. Zn(2+) serves as cofactor.

The enzyme catalyses RNA(n) + a ribonucleoside 5'-triphosphate = RNA(n+1) + diphosphate. DNA-dependent RNA polymerase catalyzes the transcription of DNA into RNA using the four ribonucleoside triphosphates as substrates. In Bacteroides fragilis (strain ATCC 25285 / DSM 2151 / CCUG 4856 / JCM 11019 / LMG 10263 / NCTC 9343 / Onslow / VPI 2553 / EN-2), this protein is DNA-directed RNA polymerase subunit beta'.